Consider the following 464-residue polypeptide: Glycine receptor subunit alpha-3 (464 aa).

The first 33 residues, 1–33 (MAHVRHFRTLVSGFYFWEAALLLSLVATKETDS), serve as a signal peptide directing secretion. Topologically, residues 34-255 (ARSRSAPMSP…RFHLERQMGY (222 aa)) are extracellular. Asn71 carries N-linked (GlcNAc...) asparagine glycosylation. Cys171 and Cys185 form a disulfide bridge. Zn(2+) contacts are provided by Glu225 and Asp227. Cys231 and Cys242 are oxidised to a cystine. 235–240 (YNTGKF) contacts strychnine. A Zn(2+)-binding site is contributed by His248. A helical membrane pass occupies residues 256 to 277 (YLIQMYIPSLLIVILSWVSFWI). At 278 to 282 (NMDAA) the chain is on the cytoplasmic side. The chain crosses the membrane as a helical span at residues 283 to 303 (PARVALGITTVLTMTTQSSGS). Residues 304–314 (RASLPKVSYVK) are Extracellular-facing. The helical transmembrane segment at 315–335 (AIDIWMAVCLLFVFSALLEYA) threads the bilayer. The Cytoplasmic portion of the chain corresponds to 336–430 (AVNFVSRQHK…FIDRAKKIDT (95 aa)). 2 positions are modified to phosphoserine: Ser370 and Ser379. The helical transmembrane segment at 431 to 451 (ISRACFPLAFLIFNIFYWVIY) threads the bilayer. Residues 452–464 (KILRHEDIHQQQD) are Extracellular-facing.

The protein belongs to the ligand-gated ion channel (TC 1.A.9) family. Glycine receptor (TC 1.A.9.3) subfamily. GLRA3 sub-subfamily. As to quaternary structure, homopentamer (in vitro). Heteropentamer composed of GLRA3 and GLRB. Both homopentamers and heteropentamers form functional ion channels, but their characteristics are subtly different. In terms of processing, phosphorylated by PKA; this causes down-regulation of channel activity. As to expression, widely distributed throughout the central nervous system.

It is found in the postsynaptic cell membrane. It localises to the perikaryon. Its subcellular location is the cell projection. The protein localises to the dendrite. The protein resides in the synapse. It is found in the cell membrane. The catalysed reaction is chloride(in) = chloride(out). Glycine receptors are ligand-gated chloride channels. Channel opening is triggered by extracellular glycine. Channel characteristics depend on the subunit composition; heteropentameric channels display faster channel closure. Plays an important role in the down-regulation of neuronal excitability. Contributes to the generation of inhibitory postsynaptic currents. Contributes to increased pain perception in response to increased prostaglandin E2 levels. Plays a role in cellular responses to ethanol. The protein is Glycine receptor subunit alpha-3 (GLRA3) of Homo sapiens (Human).